The chain runs to 95 residues: Aspartyl/glutamyl-tRNA(Asn/Gln) amidotransferase subunit C (95 aa).

It belongs to the GatC family. In terms of assembly, heterotrimer of A, B and C subunits.

It catalyses the reaction L-glutamyl-tRNA(Gln) + L-glutamine + ATP + H2O = L-glutaminyl-tRNA(Gln) + L-glutamate + ADP + phosphate + H(+). The enzyme catalyses L-aspartyl-tRNA(Asn) + L-glutamine + ATP + H2O = L-asparaginyl-tRNA(Asn) + L-glutamate + ADP + phosphate + 2 H(+). Allows the formation of correctly charged Asn-tRNA(Asn) or Gln-tRNA(Gln) through the transamidation of misacylated Asp-tRNA(Asn) or Glu-tRNA(Gln) in organisms which lack either or both of asparaginyl-tRNA or glutaminyl-tRNA synthetases. The reaction takes place in the presence of glutamine and ATP through an activated phospho-Asp-tRNA(Asn) or phospho-Glu-tRNA(Gln). This is Aspartyl/glutamyl-tRNA(Asn/Gln) amidotransferase subunit C from Pelobacter propionicus (strain DSM 2379 / NBRC 103807 / OttBd1).